Consider the following 68-residue polypeptide: Large ribosomal subunit protein uL30 (68 aa).

Residues 1–26 (MSAKKSASKATVTVQQIGSPLRREPS) are disordered. Residues 8 to 18 (SKATVTVQQIG) are compositionally biased toward polar residues.

It belongs to the universal ribosomal protein uL30 family. In terms of assembly, part of the 50S ribosomal subunit.

The polypeptide is Large ribosomal subunit protein uL30 (Parvibaculum lavamentivorans (strain DS-1 / DSM 13023 / NCIMB 13966)).